The sequence spans 133 residues: NADH dehydrogenase [ubiquinone] 1 alpha subcomplex subunit 6 (133 aa).

It belongs to the complex I LYR family. In terms of assembly, complex I is composed of at least 49 different subunits.

It is found in the mitochondrion inner membrane. Accessory subunit of the mitochondrial membrane respiratory chain NADH dehydrogenase (Complex I), that is believed to be not involved in catalysis. Complex I functions in the transfer of electrons from NADH to the respiratory chain. The immediate electron acceptor for the enzyme is believed to be ubiquinone. The chain is NADH dehydrogenase [ubiquinone] 1 alpha subcomplex subunit 6 from Arabidopsis thaliana (Mouse-ear cress).